The following is a 408-amino-acid chain: Imidazolonepropionase (408 aa).

Positions 73 and 75 each coordinate Fe(3+). The Zn(2+) site is built by His73 and His75. 4-imidazolone-5-propanoate-binding residues include Arg82, Tyr145, and His178. Tyr145 is an N-formimidoyl-L-glutamate binding site. His243 serves as a coordination point for Fe(3+). A Zn(2+)-binding site is contributed by His243. Gln246 is a 4-imidazolone-5-propanoate binding site. A Fe(3+)-binding site is contributed by Asp318. Asp318 is a Zn(2+) binding site. N-formimidoyl-L-glutamate contacts are provided by Asn320 and Gly322. Ser323 lines the 4-imidazolone-5-propanoate pocket.

It belongs to the metallo-dependent hydrolases superfamily. HutI family. Requires Zn(2+) as cofactor. It depends on Fe(3+) as a cofactor.

Its subcellular location is the cytoplasm. It carries out the reaction 4-imidazolone-5-propanoate + H2O = N-formimidoyl-L-glutamate. The protein operates within amino-acid degradation; L-histidine degradation into L-glutamate; N-formimidoyl-L-glutamate from L-histidine: step 3/3. Functionally, catalyzes the hydrolytic cleavage of the carbon-nitrogen bond in imidazolone-5-propanoate to yield N-formimidoyl-L-glutamate. It is the third step in the universal histidine degradation pathway. This is Imidazolonepropionase from Shewanella putrefaciens (strain CN-32 / ATCC BAA-453).